The primary structure comprises 702 residues: Arylphorin subunit alpha (702 aa).

An N-terminal signal peptide occupies residues 1-16 (MKTVVILAGLVALALS). Asparagine 75 and asparagine 214 each carry an N-linked (GlcNAc...) asparagine glycan.

This sequence belongs to the hemocyanin family. As to quaternary structure, arylphorin is a hexamer of subunits alpha and beta. In terms of tissue distribution, fat body.

It is found in the secreted. The protein resides in the extracellular space. Arylphorin is a larval storage protein (LSP) which may serve as a storage protein used primarily as a source of aromatic amino acids for protein synthesis during metamorphosis. It is a constituent of the sclerotizing system of the cuticle, and serves as a carrier for ecdysteroid hormone. This Manduca sexta (Tobacco hawkmoth) protein is Arylphorin subunit alpha.